A 291-amino-acid polypeptide reads, in one-letter code: Probable S-adenosylmethionine-dependent methyltransferase CRG1 (291 aa).

Belongs to the methyltransferase superfamily.

It is found in the cytoplasm. In terms of biological role, probable S-adenosylmethionine-dependent methyltransferase which mediates cantharidin resistance. In Saccharomyces cerevisiae (strain ATCC 204508 / S288c) (Baker's yeast), this protein is Probable S-adenosylmethionine-dependent methyltransferase CRG1 (CRG1).